Reading from the N-terminus, the 481-residue chain is Protein nucleotidyltransferase YdiU (481 aa).

ATP contacts are provided by G85, G87, R88, K108, D120, G121, R172, and R179. D248 acts as the Proton acceptor in catalysis. Positions 249 and 258 each coordinate Mg(2+). D258 provides a ligand contact to ATP.

This sequence belongs to the SELO family. The cofactor is Mg(2+). Mn(2+) is required as a cofactor.

It catalyses the reaction L-seryl-[protein] + ATP = 3-O-(5'-adenylyl)-L-seryl-[protein] + diphosphate. The catalysed reaction is L-threonyl-[protein] + ATP = 3-O-(5'-adenylyl)-L-threonyl-[protein] + diphosphate. The enzyme catalyses L-tyrosyl-[protein] + ATP = O-(5'-adenylyl)-L-tyrosyl-[protein] + diphosphate. It carries out the reaction L-histidyl-[protein] + UTP = N(tele)-(5'-uridylyl)-L-histidyl-[protein] + diphosphate. It catalyses the reaction L-seryl-[protein] + UTP = O-(5'-uridylyl)-L-seryl-[protein] + diphosphate. The catalysed reaction is L-tyrosyl-[protein] + UTP = O-(5'-uridylyl)-L-tyrosyl-[protein] + diphosphate. Its function is as follows. Nucleotidyltransferase involved in the post-translational modification of proteins. It can catalyze the addition of adenosine monophosphate (AMP) or uridine monophosphate (UMP) to a protein, resulting in modifications known as AMPylation and UMPylation. The polypeptide is Protein nucleotidyltransferase YdiU (Cereibacter sphaeroides (strain ATCC 17023 / DSM 158 / JCM 6121 / CCUG 31486 / LMG 2827 / NBRC 12203 / NCIMB 8253 / ATH 2.4.1.) (Rhodobacter sphaeroides)).